We begin with the raw amino-acid sequence, 162 residues long: uncharacterized protein (162 aa).

A signal peptide spans 1-24 (MKRGVATLPVILVILLSVAAGAGA).

This is an uncharacterized protein from Mycobacterium bovis (strain ATCC BAA-935 / AF2122/97).